We begin with the raw amino-acid sequence, 202 residues long: IMP cyclohydrolase (202 aa).

It belongs to the archaeal IMP cyclohydrolase family.

It carries out the reaction IMP + H2O = 5-formamido-1-(5-phospho-D-ribosyl)imidazole-4-carboxamide. The protein operates within purine metabolism; IMP biosynthesis via de novo pathway; IMP from 5-formamido-1-(5-phospho-D-ribosyl)imidazole-4-carboxamide: step 1/1. Functionally, catalyzes the cyclization of 5-formylamidoimidazole-4-carboxamide ribonucleotide to IMP. The sequence is that of IMP cyclohydrolase from Methanosphaera stadtmanae (strain ATCC 43021 / DSM 3091 / JCM 11832 / MCB-3).